A 453-amino-acid polypeptide reads, in one-letter code: RuvB-like helicase 1 (453 aa).

71–78 contributes to the ATP binding site; that stretch reads GGPGTGKT.

The protein belongs to the RuvB family. As to quaternary structure, may form heterododecamers with RVB2. Component of the SWR1 chromatin remodeling complex, the INO80 chromatin remodeling complex, and of the R2TP complex.

The protein localises to the nucleus. It catalyses the reaction ATP + H2O = ADP + phosphate + H(+). DNA helicase which participates in several chromatin remodeling complexes, including the SWR1 and the INO80 complexes. The SWR1 complex mediates the ATP-dependent exchange of histone H2A for the H2A variant HZT1 leading to transcriptional regulation of selected genes by chromatin remodeling. The INO80 complex remodels chromatin by shifting nucleosomes and is involved in DNA repair. Also involved in pre-rRNA processing. The polypeptide is RuvB-like helicase 1 (RVB1) (Yarrowia lipolytica (strain CLIB 122 / E 150) (Yeast)).